The primary structure comprises 109 residues: Nucleoid-associated protein VIBHAR_03086 (109 aa).

2 disordered regions span residues 1 to 21 (MFGK…QDRM) and 88 to 109 (QKEK…KMPF).

The protein belongs to the YbaB/EbfC family. As to quaternary structure, homodimer.

It is found in the cytoplasm. The protein localises to the nucleoid. Functionally, binds to DNA and alters its conformation. May be involved in regulation of gene expression, nucleoid organization and DNA protection. The chain is Nucleoid-associated protein VIBHAR_03086 from Vibrio campbellii (strain ATCC BAA-1116).